We begin with the raw amino-acid sequence, 368 residues long: Probable dual-specificity RNA methyltransferase RlmN (368 aa).

The Proton acceptor role is filled by E100. The region spanning 106-344 (QYYGLSVCVT…CVVRQEHGTD (239 aa)) is the Radical SAM core domain. C113 and C349 are joined by a disulfide. C120, C124, and C127 together coordinate [4Fe-4S] cluster. S-adenosyl-L-methionine-binding positions include 172-173 (GE), S204, 227-229 (SLH), and N305. Residue C349 is the S-methylcysteine intermediate of the active site.

This sequence belongs to the radical SAM superfamily. RlmN family. It depends on [4Fe-4S] cluster as a cofactor.

It is found in the cytoplasm. The catalysed reaction is adenosine(2503) in 23S rRNA + 2 reduced [2Fe-2S]-[ferredoxin] + 2 S-adenosyl-L-methionine = 2-methyladenosine(2503) in 23S rRNA + 5'-deoxyadenosine + L-methionine + 2 oxidized [2Fe-2S]-[ferredoxin] + S-adenosyl-L-homocysteine. It carries out the reaction adenosine(37) in tRNA + 2 reduced [2Fe-2S]-[ferredoxin] + 2 S-adenosyl-L-methionine = 2-methyladenosine(37) in tRNA + 5'-deoxyadenosine + L-methionine + 2 oxidized [2Fe-2S]-[ferredoxin] + S-adenosyl-L-homocysteine. Its function is as follows. Specifically methylates position 2 of adenine 2503 in 23S rRNA and position 2 of adenine 37 in tRNAs. In Streptococcus agalactiae serotype III (strain NEM316), this protein is Probable dual-specificity RNA methyltransferase RlmN.